The following is a 798-amino-acid chain: Glycogen phosphorylase (798 aa).

Position 646 is an N6-(pyridoxal phosphate)lysine (Lys646).

Belongs to the glycogen phosphorylase family. It depends on pyridoxal 5'-phosphate as a cofactor.

It catalyses the reaction [(1-&gt;4)-alpha-D-glucosyl](n) + phosphate = [(1-&gt;4)-alpha-D-glucosyl](n-1) + alpha-D-glucose 1-phosphate. Its function is as follows. Phosphorylase is an important allosteric enzyme in carbohydrate metabolism. Enzymes from different sources differ in their regulatory mechanisms and in their natural substrates. However, all known phosphorylases share catalytic and structural properties. The protein is Glycogen phosphorylase (glgP) of Bacillus subtilis (strain 168).